The sequence spans 343 residues: tRNA-specific 2-thiouridylase MnmA (343 aa).

ATP is bound by residues 7-14 (ALSGGVDS) and methionine 33. Cysteine 87 acts as the Nucleophile in catalysis. A disulfide bridge links cysteine 87 with cysteine 184. Residue glycine 111 coordinates ATP. The interval 135–137 (KDQ) is interaction with tRNA. Cysteine 184 serves as the catalytic Cysteine persulfide intermediate. Residues 289 to 290 (RY) are interaction with tRNA.

This sequence belongs to the MnmA/TRMU family.

It is found in the cytoplasm. The enzyme catalyses S-sulfanyl-L-cysteinyl-[protein] + uridine(34) in tRNA + AH2 + ATP = 2-thiouridine(34) in tRNA + L-cysteinyl-[protein] + A + AMP + diphosphate + H(+). In terms of biological role, catalyzes the 2-thiolation of uridine at the wobble position (U34) of tRNA, leading to the formation of s(2)U34. The protein is tRNA-specific 2-thiouridylase MnmA of Desulforudis audaxviator (strain MP104C).